Here is a 352-residue protein sequence, read N- to C-terminus: Probable cytosolic iron-sulfur protein assembly protein CIAO1 homolog (352 aa).

WD repeat units lie at residues 12–51, 58–97, 106–145, 151–190, 195–234, 245–284, and 303–352; these read ASNK…LWGS, AHKK…SAPE, GHTS…DVQC, PHSQ…WTVF, GHDS…GKSS, YHTR…LTHI, and AHSE…EYEL.

This sequence belongs to the WD repeat CIA1 family.

In terms of biological role, essential component of the cytosolic iron-sulfur (Fe/S) protein assembly machinery. Required for the maturation of extramitochondrial Fe/S proteins. The chain is Probable cytosolic iron-sulfur protein assembly protein CIAO1 homolog from Schistosoma japonicum (Blood fluke).